The primary structure comprises 490 residues: Betaine aldehyde dehydrogenase (490 aa).

Position 93 (aspartate 93) interacts with K(+). Glycine 150–tryptophan 152 is a binding site for NAD(+). Lysine 162 (charge relay system) is an active-site residue. Lysine 176–glutamate 179 serves as a coordination point for NAD(+). Valine 180 is a binding site for K(+). Glycine 230–serine 233 lines the NAD(+) pocket. Leucine 246 contacts K(+). The active-site Proton acceptor is glutamate 252. NAD(+)-binding residues include glycine 254, cysteine 286, and glutamate 387. Cysteine 286 acts as the Nucleophile in catalysis. Cysteine 286 bears the Cysteine sulfenic acid (-SOH) mark. 2 residues coordinate K(+): lysine 457 and glycine 460. Residue glutamate 464 is the Charge relay system of the active site.

The protein belongs to the aldehyde dehydrogenase family. Dimer of dimers. The cofactor is K(+).

It carries out the reaction betaine aldehyde + NAD(+) + H2O = glycine betaine + NADH + 2 H(+). Its pathway is amine and polyamine biosynthesis; betaine biosynthesis via choline pathway; betaine from betaine aldehyde: step 1/1. In terms of biological role, involved in the biosynthesis of the osmoprotectant glycine betaine. Catalyzes the irreversible oxidation of betaine aldehyde to the corresponding acid. The chain is Betaine aldehyde dehydrogenase from Yersinia pestis.